The chain runs to 376 residues: Queuine tRNA-ribosyltransferase (376 aa).

The Proton acceptor role is filled by aspartate 92. Substrate contacts are provided by residues 92–96 (DSGGF), aspartate 146, glutamine 190, and glycine 217. The segment at 248–254 (GVGRPED) is RNA binding. The Nucleophile role is filled by aspartate 267. The RNA binding; important for wobble base 34 recognition stretch occupies residues 272 to 276 (TRNAR). Zn(2+) is bound by residues cysteine 305, cysteine 307, cysteine 310, and histidine 337.

It belongs to the queuine tRNA-ribosyltransferase family. In terms of assembly, homodimer. Within each dimer, one monomer is responsible for RNA recognition and catalysis, while the other monomer binds to the replacement base PreQ1. Requires Zn(2+) as cofactor.

The enzyme catalyses 7-aminomethyl-7-carbaguanine + guanosine(34) in tRNA = 7-aminomethyl-7-carbaguanosine(34) in tRNA + guanine. Its pathway is tRNA modification; tRNA-queuosine biosynthesis. Functionally, catalyzes the base-exchange of a guanine (G) residue with the queuine precursor 7-aminomethyl-7-deazaguanine (PreQ1) at position 34 (anticodon wobble position) in tRNAs with GU(N) anticodons (tRNA-Asp, -Asn, -His and -Tyr). Catalysis occurs through a double-displacement mechanism. The nucleophile active site attacks the C1' of nucleotide 34 to detach the guanine base from the RNA, forming a covalent enzyme-RNA intermediate. The proton acceptor active site deprotonates the incoming PreQ1, allowing a nucleophilic attack on the C1' of the ribose to form the product. After dissociation, two additional enzymatic reactions on the tRNA convert PreQ1 to queuine (Q), resulting in the hypermodified nucleoside queuosine (7-(((4,5-cis-dihydroxy-2-cyclopenten-1-yl)amino)methyl)-7-deazaguanosine). This is Queuine tRNA-ribosyltransferase from Stenotrophomonas maltophilia (strain K279a).